The chain runs to 363 residues: DNA replication and repair protein RecF (363 aa).

30–37 (GPNGSGKT) lines the ATP pocket.

Belongs to the RecF family.

The protein localises to the cytoplasm. The RecF protein is involved in DNA metabolism; it is required for DNA replication and normal SOS inducibility. RecF binds preferentially to single-stranded, linear DNA. It also seems to bind ATP. The chain is DNA replication and repair protein RecF from Chlorobium limicola (strain DSM 245 / NBRC 103803 / 6330).